The chain runs to 147 residues: TRAF-interacting protein with FHA domain-containing protein B (147 aa).

Residues L36–S108 form the FHA domain.

As to quaternary structure, interacts with TIFA.

Inhibits TIFA-mediated TRAF6 activation possibly by inducing a conformational change in TIFA. The sequence is that of TRAF-interacting protein with FHA domain-containing protein B from Rattus norvegicus (Rat).